The sequence spans 256 residues: Metallo-beta-lactamase type 2 (256 aa).

The signal sequence occupies residues 1–29 (MKNTLLKLGVCVSLLGITPFVSTISSVQA). 5 residues coordinate Zn(2+): H115, H117, D119, H178, and C197. Residues K200 and N209 each contribute to the substrate site. H239 is a Zn(2+) binding site.

It belongs to the metallo-beta-lactamase superfamily. Class-B beta-lactamase family. Monomer. The cofactor is Zn(2+).

The protein resides in the periplasm. The catalysed reaction is a beta-lactam + H2O = a substituted beta-amino acid. Inhibited by chelating agents such as EDTA. Its function is as follows. Confers resistance to the different beta-lactams antibiotics (penicillin, cephalosporin and carbapenem) via the hydrolysis of the beta-lactam ring. Benzylpenicillin is a better substrate than cephalosporin C and ampicillin. In Bacillus cereus, this protein is Metallo-beta-lactamase type 2.